The following is a 152-amino-acid chain: MQLTELIETTVTGLGYELVDLERTGRGMLCIYIDQPAGISLEDCEKVTRQLQHVLTVENIDYERLEVSSPGLDRPLKKLADFERFAGSEVSVTLKKPLDGRKTYRGILHAPNGETIGLEFEGKKGEAAMLDFTLADIDKARLIPQVDFRSRK.

It belongs to the RimP family.

The protein resides in the cytoplasm. In terms of biological role, required for maturation of 30S ribosomal subunits. The sequence is that of Ribosome maturation factor RimP from Burkholderia lata (strain ATCC 17760 / DSM 23089 / LMG 22485 / NCIMB 9086 / R18194 / 383).